The primary structure comprises 338 residues: tRNA-cytidine(32) 2-sulfurtransferase (338 aa).

A PP-loop motif motif is present at residues 86 to 91 (SGGKDS). Cys-161, Cys-164, and Cys-252 together coordinate [4Fe-4S] cluster.

Belongs to the TtcA family. In terms of assembly, homodimer. The cofactor is Mg(2+). [4Fe-4S] cluster serves as cofactor.

It is found in the cytoplasm. It carries out the reaction cytidine(32) in tRNA + S-sulfanyl-L-cysteinyl-[cysteine desulfurase] + AH2 + ATP = 2-thiocytidine(32) in tRNA + L-cysteinyl-[cysteine desulfurase] + A + AMP + diphosphate + H(+). It functions in the pathway tRNA modification. Its function is as follows. Catalyzes the ATP-dependent 2-thiolation of cytidine in position 32 of tRNA, to form 2-thiocytidine (s(2)C32). The sulfur atoms are provided by the cysteine/cysteine desulfurase (IscS) system. In Albidiferax ferrireducens (strain ATCC BAA-621 / DSM 15236 / T118) (Rhodoferax ferrireducens), this protein is tRNA-cytidine(32) 2-sulfurtransferase.